Reading from the N-terminus, the 390-residue chain is Mannitol-1-phosphate 5-dehydrogenase (390 aa).

Position 3-14 (3-14 (ALHFGAGNIGRG)) interacts with NAD(+).

This sequence belongs to the mannitol dehydrogenase family.

It catalyses the reaction D-mannitol 1-phosphate + NAD(+) = beta-D-fructose 6-phosphate + NADH + H(+). This Buchnera aphidicola subsp. Baizongia pistaciae (strain Bp) protein is Mannitol-1-phosphate 5-dehydrogenase.